Here is a 231-residue protein sequence, read N- to C-terminus: 2-C-methyl-D-erythritol 4-phosphate cytidylyltransferase (231 aa).

This sequence belongs to the IspD/TarI cytidylyltransferase family. IspD subfamily.

The catalysed reaction is 2-C-methyl-D-erythritol 4-phosphate + CTP + H(+) = 4-CDP-2-C-methyl-D-erythritol + diphosphate. It participates in isoprenoid biosynthesis; isopentenyl diphosphate biosynthesis via DXP pathway; isopentenyl diphosphate from 1-deoxy-D-xylulose 5-phosphate: step 2/6. In terms of biological role, catalyzes the formation of 4-diphosphocytidyl-2-C-methyl-D-erythritol from CTP and 2-C-methyl-D-erythritol 4-phosphate (MEP). This is 2-C-methyl-D-erythritol 4-phosphate cytidylyltransferase from Shewanella pealeana (strain ATCC 700345 / ANG-SQ1).